Consider the following 298-residue polypeptide: Movement protein BC1 (298 aa).

Residues Leu-253 to Lys-273 are disordered.

The protein belongs to the begomovirus movement protein BC1 family. Binds to dimeric supercoiled plasmid DNA. In terms of processing, phosphorylated.

Its subcellular location is the host cell membrane. The protein resides in the host microsome membrane. The protein localises to the host endoplasmic reticulum membrane. Its function is as follows. Transports viral genome to neighboring plant cells directly through plasmosdesmata, without any budding. The movement protein allows efficient cell to cell propagation, by bypassing the host cell wall barrier. Begomovirus genome is shuttled out of nucleus by Nuclear shuttle protein (NSP) and the movement protein transports the DNA-NSP complex to cell plasmodesmata and facilitates further movement across the cell wall. This chain is Movement protein BC1, found in Hewittia sublobata (Coralbush).